Reading from the N-terminus, the 406-residue chain is Arginine deiminase (406 aa).

The active-site Amidino-cysteine intermediate is Cys396.

The protein belongs to the arginine deiminase family.

Its subcellular location is the cytoplasm. The catalysed reaction is L-arginine + H2O = L-citrulline + NH4(+). It participates in amino-acid degradation; L-arginine degradation via ADI pathway; carbamoyl phosphate from L-arginine: step 1/2. The sequence is that of Arginine deiminase from Aliivibrio fischeri (strain MJ11) (Vibrio fischeri).